The sequence spans 406 residues: Accessory Sec system protein translocase subunit SecY2 (406 aa).

The next 10 helical transmembrane spans lie at 14–34 (SWTV…LPFI), 63–83 (FSLF…WQMF), 108–128 (FAIA…EVGI), 131–151 (GLAI…LVWL), 156–176 (SFFG…ANLP), 190–210 (LPII…AVIV), 246–266 (FMYA…IQIL), 285–305 (PIWL…FAFV), 344–364 (AVIG…IVLI), and 368–388 (YLQL…VYNV).

The protein belongs to the SecY/SEC61-alpha family. SecY2 subfamily. As to quaternary structure, component of the accessory SecA2/SecY2 protein translocase complex required to export cell wall proteins. May form heterotrimers with SecE and SecG subunits.

The protein resides in the cell membrane. Part of the accessory SecA2/SecY2 system specifically required for export of possible cell wall proteins. The central subunit of a protein translocation channel. The protein is Accessory Sec system protein translocase subunit SecY2 of Streptococcus salivarius (strain CCHSS3).